A 295-amino-acid polypeptide reads, in one-letter code: Probable aspartoacylase (295 aa).

Zn(2+) is bound by residues histidine 16 and glutamate 19. Substrate contacts are provided by residues arginine 58 and 65–66 (NR). Histidine 107 is a Zn(2+) binding site. Glutamate 166 and tyrosine 277 together coordinate substrate.

The protein belongs to the AspA/AstE family. Aspartoacylase subfamily. The cofactor is Zn(2+).

The enzyme catalyses an N-acyl-L-aspartate + H2O = a carboxylate + L-aspartate. This chain is Probable aspartoacylase, found in Acaryochloris marina (strain MBIC 11017).